Here is a 46-residue protein sequence, read N- to C-terminus: Large ribosomal subunit protein bL36B (46 aa).

It belongs to the bacterial ribosomal protein bL36 family.

This Enterobacter sp. (strain 638) protein is Large ribosomal subunit protein bL36B.